A 426-amino-acid polypeptide reads, in one-letter code: MLDSKLLRTQLQDVADRLASRGFTLDVARIESLEAQRKVVQTRTEQLQAERNARSKSIGQAKQRGEDIAPLMADVERMGNELSEGKVELDAIQAELDALVLNIPNLPHESVPVGADEEGNVEVRRWGTPTAFGFEVKDHVALGEKFGWLDFETAAKLSGARFALLRGPIARLHRALAQFMINLHINEHGYEETYTPYLVQAPALQGTGQLPKFEEDLFKISREGEADLYLIPTAEVSLTNIVSGEILDAKQLPLKFVAHTPCFRSEAGASGRDTRGMIRQHQFDKVEMVQIVAPDDSMAALESLTGNAERVLQLLELPYRTLALCTGDMGFSAVKTYDLEVWIPSQDKYREISSCSNCGDFQARRMQARWRNPETGKPELVHTLNGSGLAVGRTLVAVLENYQQADGSIRVPEVLKPYMGGLEVIG.

233-235 contributes to the L-serine binding site; that stretch reads TAE. 264–266 contributes to the ATP binding site; sequence RSE. E287 provides a ligand contact to L-serine. 351 to 354 serves as a coordination point for ATP; it reads EISS. S387 lines the L-serine pocket.

This sequence belongs to the class-II aminoacyl-tRNA synthetase family. Type-1 seryl-tRNA synthetase subfamily. As to quaternary structure, homodimer. The tRNA molecule binds across the dimer.

Its subcellular location is the cytoplasm. It catalyses the reaction tRNA(Ser) + L-serine + ATP = L-seryl-tRNA(Ser) + AMP + diphosphate + H(+). The catalysed reaction is tRNA(Sec) + L-serine + ATP = L-seryl-tRNA(Sec) + AMP + diphosphate + H(+). The protein operates within aminoacyl-tRNA biosynthesis; selenocysteinyl-tRNA(Sec) biosynthesis; L-seryl-tRNA(Sec) from L-serine and tRNA(Sec): step 1/1. In terms of biological role, catalyzes the attachment of serine to tRNA(Ser). Is also able to aminoacylate tRNA(Sec) with serine, to form the misacylated tRNA L-seryl-tRNA(Sec), which will be further converted into selenocysteinyl-tRNA(Sec). The sequence is that of Serine--tRNA ligase from Pseudomonas syringae pv. tomato (strain ATCC BAA-871 / DC3000).